The primary structure comprises 388 residues: Alanine racemase (388 aa).

Lysine 39 functions as the Proton acceptor; specific for D-alanine in the catalytic mechanism. The residue at position 39 (lysine 39) is an N6-(pyridoxal phosphate)lysine. Position 129 is an N6-carboxylysine (lysine 129). A substrate-binding site is contributed by arginine 136. The active-site Proton acceptor; specific for L-alanine is tyrosine 265. Methionine 312 is a substrate binding site.

It belongs to the alanine racemase family. In terms of assembly, homodimer. The cofactor is pyridoxal 5'-phosphate.

It carries out the reaction L-alanine = D-alanine. Its pathway is amino-acid biosynthesis; D-alanine biosynthesis; D-alanine from L-alanine: step 1/1. With respect to regulation, inhibited by acetate and propionate. Irreversibly inhibited by cycloserine. Catalyzes the interconversion of L-alanine and D-alanine. Also weakly active on serine. This chain is Alanine racemase (alr), found in Geobacillus stearothermophilus (Bacillus stearothermophilus).